A 348-amino-acid polypeptide reads, in one-letter code: Anthranilate phosphoribosyltransferase (348 aa).

Residues glycine 81, 84–85 (GD), 91–94 (NVST), 109–117 (KHGNRAVSG), and serine 121 each bind 5-phospho-alpha-D-ribose 1-diphosphate. Position 81 (glycine 81) interacts with anthranilate. Serine 93 provides a ligand contact to Mg(2+). Asparagine 112 lines the anthranilate pocket. Arginine 167 contacts anthranilate. Mg(2+) is bound by residues aspartate 226 and glutamate 227.

It belongs to the anthranilate phosphoribosyltransferase family. As to quaternary structure, homodimer. It depends on Mg(2+) as a cofactor.

It catalyses the reaction N-(5-phospho-beta-D-ribosyl)anthranilate + diphosphate = 5-phospho-alpha-D-ribose 1-diphosphate + anthranilate. It participates in amino-acid biosynthesis; L-tryptophan biosynthesis; L-tryptophan from chorismate: step 2/5. In terms of biological role, catalyzes the transfer of the phosphoribosyl group of 5-phosphorylribose-1-pyrophosphate (PRPP) to anthranilate to yield N-(5'-phosphoribosyl)-anthranilate (PRA). The polypeptide is Anthranilate phosphoribosyltransferase (Ectopseudomonas mendocina (strain ymp) (Pseudomonas mendocina)).